A 366-amino-acid chain; its full sequence is Chalcone synthase B (366 aa).

Cys-172 is a catalytic residue.

It belongs to the thiolase-like superfamily. Chalcone/stilbene synthases family.

It carries out the reaction (E)-4-coumaroyl-CoA + 3 malonyl-CoA + 3 H(+) = 2',4,4',6'-tetrahydroxychalcone + 3 CO2 + 4 CoA. It functions in the pathway secondary metabolite biosynthesis; flavonoid biosynthesis. Functionally, the primary product of this enzyme is 4,2',4',6'-tetrahydroxychalcone (also termed naringenin-chalcone or chalcone) which can under specific conditions spontaneously isomerize into naringenin. The protein is Chalcone synthase B (CHSB) of Ipomoea triloba (Trilobed morning glory).